Reading from the N-terminus, the 179-residue chain is Adenine phosphoribosyltransferase (179 aa).

The protein belongs to the purine/pyrimidine phosphoribosyltransferase family. Homodimer.

It is found in the cytoplasm. The catalysed reaction is AMP + diphosphate = 5-phospho-alpha-D-ribose 1-diphosphate + adenine. It functions in the pathway purine metabolism; AMP biosynthesis via salvage pathway; AMP from adenine: step 1/1. Catalyzes a salvage reaction resulting in the formation of AMP, that is energically less costly than de novo synthesis. The polypeptide is Adenine phosphoribosyltransferase (Jannaschia sp. (strain CCS1)).